Reading from the N-terminus, the 301-residue chain is Pyridoxal 5'-phosphate synthase subunit PdxS (301 aa).

D31 is a D-ribose 5-phosphate binding site. The Schiff-base intermediate with D-ribose 5-phosphate role is filled by K88. Residue G160 coordinates D-ribose 5-phosphate. R172 serves as a coordination point for D-glyceraldehyde 3-phosphate. D-ribose 5-phosphate is bound by residues G221 and 242–243 (GS). The tract at residues 273 to 301 (EIAKSPGKGMKGQANETLPEEEKLQDRGI) is disordered. Basic and acidic residues predominate over residues 292-301 (EEEKLQDRGI).

Belongs to the PdxS/SNZ family. In the presence of PdxT, forms a dodecamer of heterodimers.

The catalysed reaction is aldehydo-D-ribose 5-phosphate + D-glyceraldehyde 3-phosphate + L-glutamine = pyridoxal 5'-phosphate + L-glutamate + phosphate + 3 H2O + H(+). It functions in the pathway cofactor biosynthesis; pyridoxal 5'-phosphate biosynthesis. Its function is as follows. Catalyzes the formation of pyridoxal 5'-phosphate from ribose 5-phosphate (RBP), glyceraldehyde 3-phosphate (G3P) and ammonia. The ammonia is provided by the PdxT subunit. Can also use ribulose 5-phosphate and dihydroxyacetone phosphate as substrates, resulting from enzyme-catalyzed isomerization of RBP and G3P, respectively. In Natronomonas pharaonis (strain ATCC 35678 / DSM 2160 / CIP 103997 / JCM 8858 / NBRC 14720 / NCIMB 2260 / Gabara) (Halobacterium pharaonis), this protein is Pyridoxal 5'-phosphate synthase subunit PdxS.